The following is a 499-amino-acid chain: Putative ribose/galactose/methyl galactoside import ATP-binding protein 3 (499 aa).

ABC transporter domains lie at Leu8 to Glu243 and Ser253 to Glu497. Gly40–Ser47 lines the ATP pocket.

It belongs to the ABC transporter superfamily. Carbohydrate importer 2 (CUT2) (TC 3.A.1.2) family.

It is found in the cell inner membrane. It carries out the reaction D-ribose(out) + ATP + H2O = D-ribose(in) + ADP + phosphate + H(+). The catalysed reaction is D-galactose(out) + ATP + H2O = D-galactose(in) + ADP + phosphate + H(+). In terms of biological role, part of an ABC transporter complex involved in carbohydrate import. Could be involved in ribose, galactose and/or methyl galactoside import. Responsible for energy coupling to the transport system. The chain is Putative ribose/galactose/methyl galactoside import ATP-binding protein 3 from Agrobacterium fabrum (strain C58 / ATCC 33970) (Agrobacterium tumefaciens (strain C58)).